Reading from the N-terminus, the 270-residue chain is tRNA pseudouridine synthase A (270 aa).

The Nucleophile role is filled by D60. Residues F107–F111 form an RNA binding region. Y118 contributes to the substrate binding site. The interaction with tRNA stretch occupies residues Q168–R172.

Belongs to the tRNA pseudouridine synthase TruA family. As to quaternary structure, homodimer.

The enzyme catalyses uridine(38/39/40) in tRNA = pseudouridine(38/39/40) in tRNA. In terms of biological role, formation of pseudouridine at positions 38, 39 and 40 in the anticodon stem and loop of transfer RNAs. This chain is tRNA pseudouridine synthase A, found in Shigella sonnei (strain Ss046).